The following is a 187-amino-acid chain: MSFKLFDKWDVTEVTVEDMGLQNYVCLDEIVVPHTMGRHVKRQFAKSKVSIVERLMNKIMRTERNSGKKNKAYSIVEDALEIINNKTKQNPVQVLVKAVENTAPREETTRIKYGGIGYQIAVDIAPQRRVDLSLGFITKGAMQSAFKNKKSAAQCLADEILLASDEDSRSFAVQKKEEKERVARSAH.

It belongs to the universal ribosomal protein uS7 family. In terms of assembly, part of the 30S ribosomal subunit.

One of the primary rRNA binding proteins, it binds directly to 16S rRNA where it nucleates assembly of the head domain of the 30S subunit. Is located at the subunit interface close to the decoding center. In Methanosphaera stadtmanae (strain ATCC 43021 / DSM 3091 / JCM 11832 / MCB-3), this protein is Small ribosomal subunit protein uS7.